The chain runs to 163 residues: Staphylokinase (163 aa).

An N-terminal signal peptide occupies residues 1-27 (MLKRSLLFLTVLLLLFSFSSITNEVSA).

It belongs to the staphylokinase family.

Its subcellular location is the secreted. Its function is as follows. Potent plasminogen activator that converts plasminogen into plasmin. It forms a 1:1 complex with plasmin, which in turn activates other plasminogen molecules. This Staphylococcus aureus (Bacteriophage P42D) protein is Staphylokinase (sak).